The following is a 296-amino-acid chain: NH(3)-dependent NAD(+) synthetase (296 aa).

Position 30–37 (30–37 (GVSGGLDS)) interacts with ATP. Residue Asp-36 coordinates Mg(2+). Arg-157 serves as a coordination point for deamido-NAD(+). Glu-182 contacts Mg(2+). Deamido-NAD(+)-binding residues include Lys-190 and Asp-197. The ATP site is built by Lys-206 and Ser-228.

This sequence belongs to the NAD synthetase family. In terms of assembly, homodimer.

The catalysed reaction is deamido-NAD(+) + NH4(+) + ATP = AMP + diphosphate + NAD(+) + H(+). Its pathway is cofactor biosynthesis; NAD(+) biosynthesis; NAD(+) from deamido-NAD(+) (ammonia route): step 1/1. Functionally, catalyzes the ATP-dependent amidation of deamido-NAD to form NAD. Uses ammonia as a nitrogen source. The sequence is that of NH(3)-dependent NAD(+) synthetase from Coprothermobacter proteolyticus (strain ATCC 35245 / DSM 5265 / OCM 4 / BT).